The chain runs to 428 residues: MSSVKVYKALAFSLRTSEIASDKSISHRCAMFAMLADGTSQITNFLRAEDTMNSLKIVKNLGATIDDDGETIKISSDGIKESSEVLDCGNSGTGMRLFCGLLSSADGHFVLSGDEYLRRRPMKRITAPLRDIGAKLDGRENGDLAPLSIRGASLKAFNYESKIASAQVKSAMILAALRADGECSFSEPELSRDHTERMLKGMGAEIEVEGLITKIKPMKKLLSPLKIRVPADPSSAFFFAVAAAITPNSNVVLEGVTLNPTRIEAFKALERMGADIRYEATENIYEPIGNIHVKYAPLKAITVEDNISWLIDELPALSIAFACADGVSIVKNAQELRVKESDRISTVVNGLKACGIEVDEVHDGYSVKGGVLKEAKIDSHGDHRIAMSFIIAGVTCGMRVDDIACINTSFPNFFELLKKITKVEFTSL.

3-phosphoshikimate is bound by residues Lys23, Ser24, and Arg28. Residue Lys23 participates in phosphoenolpyruvate binding. Phosphoenolpyruvate contacts are provided by Gly92 and Arg120. 3-phosphoshikimate-binding residues include Ser165, Gln167, Asp312, and Lys339. Gln167 provides a ligand contact to phosphoenolpyruvate. Asp312 serves as the catalytic Proton acceptor. Phosphoenolpyruvate-binding residues include Arg343 and Arg384.

It belongs to the EPSP synthase family. As to quaternary structure, monomer.

The protein localises to the cytoplasm. It carries out the reaction 3-phosphoshikimate + phosphoenolpyruvate = 5-O-(1-carboxyvinyl)-3-phosphoshikimate + phosphate. It participates in metabolic intermediate biosynthesis; chorismate biosynthesis; chorismate from D-erythrose 4-phosphate and phosphoenolpyruvate: step 6/7. Catalyzes the transfer of the enolpyruvyl moiety of phosphoenolpyruvate (PEP) to the 5-hydroxyl of shikimate-3-phosphate (S3P) to produce enolpyruvyl shikimate-3-phosphate and inorganic phosphate. This Sulfurimonas denitrificans (strain ATCC 33889 / DSM 1251) (Thiomicrospira denitrificans (strain ATCC 33889 / DSM 1251)) protein is 3-phosphoshikimate 1-carboxyvinyltransferase.